A 481-amino-acid chain; its full sequence is RAC-beta serine/threonine-protein kinase (481 aa).

M1 carries the post-translational modification N-acetylmethionine. The region spanning 5–108 (SVIKEGWLHK…WIRAIQMVAN (104 aa)) is the PH domain. S34 bears the Phosphoserine mark. A disulfide bridge connects residues C60 and C77. S126 bears the Phosphoserine mark. O-linked (GlcNAc) serine glycans are attached at residues S128 and S131. In terms of domain architecture, Protein kinase spans 152–409 (FDYLKLLGKG…AKEVMEHRFF (258 aa)). ATP contacts are provided by residues 158 to 166 (LGKGTFGKV) and K181. The Proton acceptor role is filled by D275. Mn(2+)-binding residues include N280 and D293. T306 carries an O-linked (GlcNAc) threonine glycan. T309 bears the Phosphothreonine; by PDPK1 mark. The O-linked (GlcNAc) threonine glycan is linked to T313. Positions 410–481 (LSINWQDVVQ…QFSYSASIRE (72 aa)) constitute an AGC-kinase C-terminal domain. S447 carries the post-translational modification Phosphoserine. T451 bears the Phosphothreonine mark. 3 positions are modified to phosphoserine: S461, S474, and S478. O-linked (GlcNAc) serine; alternate glycosylation is present at S474.

The protein belongs to the protein kinase superfamily. AGC Ser/Thr protein kinase family. RAC subfamily. Interacts with BTBD10. Interacts with KCTD20. Interacts (via PH domain) with MTCP1, TCL1A and TCL1B; this interaction may facilitate AKT2 oligomerization and phosphorylation, hence increasing kinase activity. Interacts with PHB2; this interaction may be important for myogenic differentiation. Interacts (when phosphorylated) with CLIP3; this interaction promotes cell membrane localization. Interacts with WDFY2 (via WD repeats 1-3). Phosphorylation on Thr-309 and Ser-474 is required for full activity. Phosphorylation of the activation loop at Thr-309 by PDPK1/PDK1 is a prerequisite for full activation. Phosphorylated and activated by PDPK1/PDK1 in the presence of phosphatidylinositol 3,4,5-trisphosphate. Phosphorylation by mTORC2 in response to growth factors plays a key role in AKT1 activation: mTORC2 phosphorylates different sites depending on the context, such as Ser-474 or Ser-478, thereby facilitating subsequent phosphorylation of the activation loop by PDPK1/PDK1. In terms of processing, ubiquitinated; undergoes both 'Lys-48'- and 'Lys-63'-linked polyubiquitination. TRAF6-induced 'Lys-63'-linked AKT2 ubiquitination. When fully phosphorylated and translocated into the nucleus, undergoes 'Lys-48'-polyubiquitination catalyzed by TTC3, leading to its degradation by the proteasome. Post-translationally, O-GlcNAcylation at Thr-306 and Thr-313 inhibits activating phosphorylation at Thr-309 via disrupting the interaction between AKT and PDPK1/PDK1. In terms of tissue distribution, expressed in adipocytes and hepatocytes (at protein level). Expressed at low levels in skeletal muscle (at protein level).

The protein localises to the cytoplasm. The protein resides in the nucleus. It localises to the cell membrane. It is found in the early endosome. The enzyme catalyses L-seryl-[protein] + ATP = O-phospho-L-seryl-[protein] + ADP + H(+). The catalysed reaction is L-threonyl-[protein] + ATP = O-phospho-L-threonyl-[protein] + ADP + H(+). Its activity is regulated as follows. Phosphorylation at Thr-309 (in the kinase domain) and Ser-474 (in the C-terminal regulatory region) is required for full activation. In adipocytes and hepatocytes, the activation is induced by insulin. AKT2 phosphorylation of PKP1 is induced by insulin. Serine/threonine kinase closely related to AKT1 and AKT3. All 3 enzymes, AKT1, AKT2 and AKT3, are collectively known as AKT kinase. AKT regulates many processes including metabolism, proliferation, cell survival, growth and angiogenesis, through the phosphorylation of a range of downstream substrates. Over 100 substrates have been reported so far, although for most of them, the precise AKT kinase catalyzing the reaction was not specified. AKT regulates glucose uptake by mediating insulin-induced translocation of the SLC2A4/GLUT4 glucose transporter to the cell surface. Phosphorylation of PTPN1 at 'Ser-50' negatively modulates its phosphatase activity preventing dephosphorylation of the insulin receptor and the attenuation of insulin signaling. Phosphorylation of TBC1D4 triggers the binding of this effector to inhibitory 14-3-3 proteins, which is required for insulin-stimulated glucose transport. AKT also regulates the storage of glucose in the form of glycogen by phosphorylating GSK3A at 'Ser-21' and GSK3B at 'Ser-9', resulting in inhibition of its kinase activity. Phosphorylation of GSK3 isoforms by AKT is also thought to be one mechanism by which cell proliferation is driven. AKT also regulates cell survival via the phosphorylation of MAP3K5 (apoptosis signal-related kinase). Phosphorylation of 'Ser-83' decreases MAP3K5 kinase activity stimulated by oxidative stress and thereby prevents apoptosis. AKT mediates insulin-stimulated protein synthesis by phosphorylating TSC2 at 'Ser-939' and 'Thr-1462', thereby activating mTORC1 signaling and leading to both phosphorylation of 4E-BP1 and in activation of RPS6KB1. AKT is involved in the phosphorylation of members of the FOXO factors (Forkhead family of transcription factors), leading to binding of 14-3-3 proteins and cytoplasmic localization. In particular, FOXO1 is phosphorylated at 'Thr-24', 'Ser-256' and 'Ser-319'. FOXO3 and FOXO4 are phosphorylated on equivalent sites. AKT has an important role in the regulation of NF-kappa-B-dependent gene transcription and positively regulates the activity of CREB1 (cyclic AMP (cAMP)-response element binding protein). The phosphorylation of CREB1 induces the binding of accessory proteins that are necessary for the transcription of pro-survival genes such as BCL2 and MCL1. AKT phosphorylates 'Ser-454' on ATP citrate lyase (ACLY), thereby potentially regulating ACLY activity and fatty acid synthesis. Activates the 3B isoform of cyclic nucleotide phosphodiesterase (PDE3B) via phosphorylation of 'Ser-273', resulting in reduced cyclic AMP levels and inhibition of lipolysis. Phosphorylates PIKFYVE on 'Ser-318', which results in increased PI(3)P-5 activity. The Rho GTPase-activating protein DLC1 is another substrate and its phosphorylation is implicated in the regulation cell proliferation and cell growth. AKT plays a role as key modulator of the AKT-mTOR signaling pathway controlling the tempo of the process of newborn neurons integration during adult neurogenesis, including correct neuron positioning, dendritic development and synapse formation. Signals downstream of phosphatidylinositol 3-kinase (PI(3)K) to mediate the effects of various growth factors such as platelet-derived growth factor (PDGF), epidermal growth factor (EGF), insulin and insulin-like growth factor 1 (IGF1). AKT mediates the antiapoptotic effects of IGF1. Essential for the SPATA13-mediated regulation of cell migration and adhesion assembly and disassembly. May be involved in the regulation of the placental development. In response to lysophosphatidic acid stimulation, inhibits the ciliogenesis cascade. In this context, phosphorylates WDR44, hence stabilizing its interaction with Rab11 and preventing the formation of the ciliogenic Rab11-FIP3-RAB3IP complex. Also phosphorylates RAB3IP/Rabin8, thus may affect RAB3IP guanine nucleotide exchange factor (GEF) activity toward Rab8, which is important for cilia growth. Phosphorylates PKP1, facilitating its interaction with YWHAG and translocation to the nucleus, ultimately resulting in a reduction in keratinocyte intercellular adhesion. Phosphorylation of PKP1 increases PKP1 protein stability, translocation to the cytoplasm away from desmosome plaques and PKP1-driven cap-dependent translation. In terms of biological role, several AKT2-specific substrates have been identified, including ANKRD2, C2CD5, CLK2 and PITX2. May play a role in myoblast differentiation. In this context, may act through PITX2 phosphorylation. Unphosphorylated PITX2 associates with an ELAVL1/HuR-containing complex, which stabilizes cyclin mRNA and ensuring cell proliferation. Phosphorylation by AKT2 impairs this association, leading to CCND1 mRNA destabilization and progression towards differentiation. Also involved in the negative regulation of myogenesis in response to stress conditions. In this context, acts by phosphorylating ANKRD2. May also be a key regulator of glucose uptake. Regulates insulin-stimulated glucose transport by the increase of glucose transporter GLUT4 translocation from intracellular stores to the plasma membrane. In this context, acts by phosphorylating C2CD5/CDP138 on 'Ser-197' in insulin-stimulated adipocytes. Through the phosphorylation of CLK2 on 'Thr-343', involved in insulin-regulated suppression of hepatic gluconeogenesis. This Rattus norvegicus (Rat) protein is RAC-beta serine/threonine-protein kinase.